We begin with the raw amino-acid sequence, 260 residues long: Cytosolic Fe-S cluster assembly factor Nubp2 homolog 2 (260 aa).

ATP is bound at residue 14 to 21; it reads GKGGVGKS. [4Fe-4S] cluster-binding residues include Cys-188 and Cys-191.

This sequence belongs to the Mrp/NBP35 ATP-binding proteins family. NUBP2/CFD1 subfamily. In terms of assembly, heterotetramer of 2 Nubp1 and 2 Nubp2 chains. Requires [4Fe-4S] cluster as cofactor.

It is found in the cytoplasm. Functionally, component of the cytosolic iron-sulfur (Fe/S) protein assembly (CIA) machinery. Required for maturation of extramitochondrial Fe-S proteins. The Nubp1-Nubp2 heterotetramer forms a Fe-S scaffold complex, mediating the de novo assembly of an Fe-S cluster and its transfer to target apoproteins. The chain is Cytosolic Fe-S cluster assembly factor Nubp2 homolog 2 from Drosophila yakuba (Fruit fly).